The chain runs to 490 residues: ATP synthase subunit beta, chloroplastic (490 aa).

Position 170–177 (170–177 (GGAGVGKT)) interacts with ATP.

The protein belongs to the ATPase alpha/beta chains family. F-type ATPases have 2 components, CF(1) - the catalytic core - and CF(0) - the membrane proton channel. CF(1) has five subunits: alpha(3), beta(3), gamma(1), delta(1), epsilon(1). CF(0) has four main subunits: a(1), b(1), b'(1) and c(9-12).

It localises to the plastid. Its subcellular location is the chloroplast thylakoid membrane. It catalyses the reaction ATP + H2O + 4 H(+)(in) = ADP + phosphate + 5 H(+)(out). Its function is as follows. Produces ATP from ADP in the presence of a proton gradient across the membrane. The catalytic sites are hosted primarily by the beta subunits. The sequence is that of ATP synthase subunit beta, chloroplastic from Convolvulus arvensis (Field bindweed).